Reading from the N-terminus, the 40-residue chain is Photosystem II reaction center protein J (40 aa).

Residues 8-28 (IPLWLIGTVTGIPVIGSMGIF) traverse the membrane as a helical segment.

The protein belongs to the PsbJ family. As to quaternary structure, PSII is composed of 1 copy each of membrane proteins PsbA, PsbB, PsbC, PsbD, PsbE, PsbF, PsbH, PsbI, PsbJ, PsbK, PsbL, PsbM, PsbT, PsbX, PsbY, PsbZ, Psb30/Ycf12, at least 3 peripheral proteins of the oxygen-evolving complex and a large number of cofactors. It forms dimeric complexes.

It localises to the plastid. The protein localises to the chloroplast thylakoid membrane. In terms of biological role, one of the components of the core complex of photosystem II (PSII). PSII is a light-driven water:plastoquinone oxidoreductase that uses light energy to abstract electrons from H(2)O, generating O(2) and a proton gradient subsequently used for ATP formation. It consists of a core antenna complex that captures photons, and an electron transfer chain that converts photonic excitation into a charge separation. The chain is Photosystem II reaction center protein J from Illicium oligandrum (Star anise).